An 827-amino-acid polypeptide reads, in one-letter code: Periplasmic nitrate reductase (827 aa).

The tat-type signal signal peptide spans 1–32 (MNLSRRDFMKANAALAAASVAGLIIPVKNVNA). The 4Fe-4S Mo/W bis-MGD-type domain occupies 37-93 (ITWDKAVCRFCGTGCAVLVGTKDGRVVASQGDPDAEVNRGLNCIKGYFLPKIMYGKD). Cys44, Cys47, Cys51, and Cys79 together coordinate [4Fe-4S] cluster. Residues Lys81, Gln148, Asn173, Cys177, 210–217 (WGSNMAEM), 242–246 (STFEH), 261–263 (QSD), Met372, Gln376, Asn482, 508–509 (SD), Lys531, Asp558, and 717–726 (TGRILEHWHT) contribute to the Mo-bis(molybdopterin guanine dinucleotide) site. Phe793 is a substrate binding site. Mo-bis(molybdopterin guanine dinucleotide) is bound by residues Asn801 and Lys818.

Belongs to the prokaryotic molybdopterin-containing oxidoreductase family. NasA/NapA/NarB subfamily. In terms of assembly, component of the periplasmic nitrate reductase NapAB complex composed of NapA and NapB. The cofactor is [4Fe-4S] cluster. Mo-bis(molybdopterin guanine dinucleotide) is required as a cofactor. Predicted to be exported by the Tat system. The position of the signal peptide cleavage has not been experimentally proven.

It localises to the periplasm. It catalyses the reaction 2 Fe(II)-[cytochrome] + nitrate + 2 H(+) = 2 Fe(III)-[cytochrome] + nitrite + H2O. Its function is as follows. Catalytic subunit of the periplasmic nitrate reductase complex NapAB. Receives electrons from NapB and catalyzes the reduction of nitrate to nitrite. This chain is Periplasmic nitrate reductase, found in Histophilus somni (strain 2336) (Haemophilus somnus).